The following is a 190-amino-acid chain: Riboflavin transporter FmnP (190 aa).

Topologically, residues 1–5 (MKVKK) are extracellular. Residues 6–26 (LVVVSMLSSIAFVLMLLNFPF) form a helical membrane-spanning segment. The Cytoplasmic portion of the chain corresponds to 27–39 (PGLPDYLKIDFSD). A helical transmembrane segment spans residues 40 to 60 (VPAIIAILIYGPLAGIAVEAI). Topologically, residues 61–76 (KNVLQYIIQGSMAGVP) are extracellular. Residues 77–97 (VGQVANFIAGTLFILPTAFLF) traverse the membrane as a helical segment. At 98-109 (KKLNSAKGLAVS) the chain is on the cytoplasmic side. The helical transmembrane segment at 110–130 (LLLGTAAMTILMSILNYVLIL) threads the bilayer. Over 131–154 (PAYTWFLHSPALSDSALKTAVVAG) the chain is Extracellular. A helical membrane pass occupies residues 155 to 175 (ILPFNMIKGIVITVVFSLIFI). Residues 176-190 (KLKPWIEQQRSAHIH) lie on the Cytoplasmic side of the membrane.

This sequence belongs to the prokaryotic riboflavin transporter (P-RFT) (TC 2.A.87) family. Forms a stable energy-coupling factor (ECF) transporter complex composed of a membrane-embedded substrate-binding protein (S component), 2 ATP-binding proteins (A component) and 2 transmembrane proteins (T component). May be able to interact with more than 1 S component at a time.

The protein resides in the cell membrane. Its activity is regulated as follows. Inhibited by excess of riboflavin or FMN. Also inhibited by protonophores such as CCCP and FCCP or in the absence of glucose. Its function is as follows. Mediates uptake of riboflavin and roseoflavin, a toxic riboflavin analog; may also transport FMN. Probably a riboflavin-binding protein that interacts with the energy-coupling factor (ECF) ABC-transporter complex. Unlike classic ABC transporters this ECF transporter provides the energy necessary to transport a number of different substrates. The substrates themselves are bound by transmembrane, not extracytoplasmic soluble proteins. The protein is Riboflavin transporter FmnP (fmnP) of Bacillus subtilis (strain 168).